The chain runs to 430 residues: GPI mannosyltransferase 1 (430 aa).

Residues 1 to 11 (MELQSLIDTVS) are Cytoplasmic-facing. Residues 12–32 (LQKLLLLGALLRLILIAYAFF) form a helical membrane-spanning segment. Topologically, residues 33–72 (HDQWFRVKYTDIDYMIVVDGARHMWNGGSPFDRTTFRYTP) are lumenal. The chain crosses the membrane as a helical span at residues 73–93 (LLAALVMPSIWIANPMGKLIF). The Cytoplasmic portion of the chain corresponds to 94 to 115 (ASSDLGAAWYCYGVLKSFAKER). The helical transmembrane segment at 116-136 (SAKWMVSLFILFNPIVLSVST) threads the bilayer. Residues 137-163 (RGNSDMLVTFMSLMVLSKFARRKCYQA) are Lumenal-facing. Residues 164–184 (AAVLGFAVHFKIYPIIYALPL) form a helical membrane-spanning segment. Residues 185–206 (TLGVWEQSVAASTNTWRRVVKT) are Cytoplasmic-facing. A helical membrane pass occupies residues 207–227 (AVVVSICALMAAISFAVPTVL). Residues 228–360 (CYMKYGQQYL…AFKFFSWVKA (133 aa)) are Lumenal-facing. Residues 361 to 381 (LGVVLMWAATIPLWVTTAVPL) form a helical membrane-spanning segment. The Cytoplasmic portion of the chain corresponds to 382–388 (EFHGYSD). A helical transmembrane segment spans residues 389–409 (FAQLWIVSCLFFLAMVVLASM). Residues 410–430 (LARIAYRVQCTKCSAKSIKVA) are Lumenal-facing.

Belongs to the PIGM family.

The protein localises to the endoplasmic reticulum membrane. It participates in glycolipid biosynthesis; glycosylphosphatidylinositol-anchor biosynthesis. Mannosyltransferase involved in glycosylphosphatidylinositol-anchor biosynthesis. Transfers the first alpha-1,4-mannose to GlcN-PI during GPI precursor assembly. This is GPI mannosyltransferase 1 (PIGM) from Trypanosoma brucei brucei (strain 927/4 GUTat10.1).